A 254-amino-acid chain; its full sequence is Small ribosomal subunit protein uS2 (254 aa).

This sequence belongs to the universal ribosomal protein uS2 family.

In Borrelia recurrentis (strain A1), this protein is Small ribosomal subunit protein uS2.